Reading from the N-terminus, the 156-residue chain is Small ribosomal subunit protein uS7 (156 aa).

It belongs to the universal ribosomal protein uS7 family. As to quaternary structure, part of the 30S ribosomal subunit. Contacts proteins S9 and S11.

One of the primary rRNA binding proteins, it binds directly to 16S rRNA where it nucleates assembly of the head domain of the 30S subunit. Is located at the subunit interface close to the decoding center, probably blocks exit of the E-site tRNA. This is Small ribosomal subunit protein uS7 from Pseudarthrobacter chlorophenolicus (strain ATCC 700700 / DSM 12829 / CIP 107037 / JCM 12360 / KCTC 9906 / NCIMB 13794 / A6) (Arthrobacter chlorophenolicus).